The sequence spans 172 residues: Ribosome maturation factor RimM (172 aa).

One can recognise a PRC barrel domain in the interval 95-168; that stretch reads AEGEFYYHQI…RVDVEIMEGL (74 aa).

This sequence belongs to the RimM family. Binds ribosomal protein uS19.

The protein resides in the cytoplasm. Its function is as follows. An accessory protein needed during the final step in the assembly of 30S ribosomal subunit, possibly for assembly of the head region. Essential for efficient processing of 16S rRNA. May be needed both before and after RbfA during the maturation of 16S rRNA. It has affinity for free ribosomal 30S subunits but not for 70S ribosomes. This chain is Ribosome maturation factor RimM, found in Streptococcus equi subsp. zooepidemicus (strain MGCS10565).